The following is a 2327-amino-acid chain: Voltage-dependent N-type calcium channel subunit alpha-1B (2327 aa).

Residues 1 to 37 (MVRFGDELGGRYGGTGGGERARGGGAGGAGGPGQGGL) form a disordered region. At 1–90 (MVRFGDELGG…DNVVRKYAKR (90 aa)) the chain is on the cytoplasmic side. A compositionally biased stretch (gly residues) spans 10–37 (GRYGGTGGGERARGGGAGGAGGPGQGGL). The residue at position 22 (Arg-22) is an Omega-N-methylarginine. The stretch at 82–359 (NVVRKYAKRI…LVLGVLSGEF (278 aa)) is one I repeat. Residues 91 to 114 (ITEWPPFEYMILATIIANCIVLAL) form a helical membrane-spanning segment. Residues 115 to 131 (EQHLPDGDKTPMSERLD) lie on the Extracellular side of the membrane. A helical membrane pass occupies residues 132–152 (DTEPYFIGIFCFEAGIKIIAL). Residues 153 to 163 (GFVFHKGSYLR) are Cytoplasmic-facing. The chain crosses the membrane as a helical span at residues 164–182 (NGWNVMDFVVVLTGILATA). The Extracellular portion of the chain corresponds to 183 to 187 (GTDFD). The helical transmembrane segment at 188-211 (LRTLRAVRVLRPLKLVSGIPSLQV) threads the bilayer. At 212–221 (VLKSIMKAMV) the chain is on the cytoplasmic side. A helical transmembrane segment spans residues 222 to 244 (PLLQIGLLLFFAILMFAIIGLEF). The Extracellular segment spans residues 245–331 (YMGKFHKACF…NTNDAAGNTW (87 aa)). Asn-256 carries N-linked (GlcNAc...) asparagine glycosylation. A helical membrane pass occupies residues 332-356 (NWLYFIPLIIIGSFFMLNLVLGVLS). Over 357–482 (GEFAKERERV…FFIRRMVKAQ (126 aa)) the chain is Cytoplasmic. The binding to the beta subunit stretch occupies residues 379 to 396 (QQIERELNGYLEWIFKAE). Residue Ser-411 is modified to Phosphoserine. Residue 451 to 458 (ASLKSGKT) participates in ATP binding. The II repeat unit spans residues 468–712 (EKMFRFFIRR…VFLAIAVDNL (245 aa)). Residues 483–501 (SFYWVVLCVVALNTLCVAM) traverse the membrane as a helical segment. Over 502–511 (VHYNQPQRLT) the chain is Extracellular. A helical membrane pass occupies residues 512 to 534 (TALYFAEFVFLGLFLTEMSLKMY). Residues 535–544 (GLGPRSYFRS) lie on the Cytoplasmic side of the membrane. An a 1,2-diacyl-sn-glycero-3-phospho-(1D-myo-inositol-4,5-bisphosphate)-binding site is contributed by Ser-544. A helical transmembrane segment spans residues 545–566 (SFNCFDFGVIVGSIFEVVWAAI). The Extracellular segment spans residues 567–573 (KPGTSFG). The chain crosses the membrane as a helical span at residues 574-586 (ISVLRALRLLRIF). A 1,2-diacyl-sn-glycero-3-phospho-(1D-myo-inositol-4,5-bisphosphate) contacts are provided by Arg-584 and Lys-587. Over 587-604 (KVTKYWNSLRNLVVSLLN) the chain is Cytoplasmic. A helical transmembrane segment spans residues 605-630 (SMKSIISLLFLLFLFIVVFALLGMQL). Residues 631–682 (FGGQFNFQDETPTTNFDTFPAAILTVFQILTGEDWNAVMYHGIESQGGVSKG) lie on the Extracellular side of the membrane. Residues 683–709 (MFSSFYFIVLTLFGNYTLLNVFLAIAV) form a helical membrane-spanning segment. Over 710-1140 (DNLANAQELT…FCHYIVTMRY (431 aa)) the chain is Cytoplasmic. Phosphoserine is present on residues Ser-745, Ser-748, and Ser-783. 2 disordered regions span residues 802-1015 (TRHV…KEPH) and 1042-1066 (EQPE…PSTT). 5 stretches are compositionally biased toward basic and acidic residues: residues 805–826 (VRPD…RDGL), 869–885 (EQDR…EERA), 914–924 (GSPEEATEREP), 961–972 (GPREAENNEEPT), and 988–1015 (PERE…KEPH). The segment covering 1050–1066 (QRNVTRMGSQPSDPSTT) has biased composition (polar residues). Ser-1058 is modified (phosphoserine). Residues 1126–1412 (NLLRRFCHYI…IFVALIIITF (287 aa)) form an III repeat. A helical transmembrane segment spans residues 1141-1159 (FEMVILVVIALSSIALAAE). Over 1160 to 1167 (DPVRTDSF) the chain is Extracellular. A helical transmembrane segment spans residues 1168–1192 (RNNALKYMDYIFTGVFTFEMVIKMI). The Cytoplasmic segment spans residues 1193 to 1206 (DLGLLLHPGAYFRD). The helical transmembrane segment at 1207–1231 (LWNILDFIVVSGALVAFAFSSFMGG) threads the bilayer. Topologically, residues 1232–1237 (SKGKDI) are extracellular. A helical transmembrane segment spans residues 1238-1258 (NTIKSLRVLRVLRPLKTIKRL). The Cytoplasmic segment spans residues 1259 to 1276 (PKLKAVFDCVVNSLKNVL). Residues 1277–1296 (NILIVYMLFMFIFAVIAVQL) traverse the membrane as a helical segment. At 1297–1383 (FKGKFFYCTD…EQGPSPGFRM (87 aa)) the chain is on the extracellular side. A helical membrane pass occupies residues 1384–1409 (ELSIFYVVYFVVFPFFFVNIFVALII). The Cytoplasmic segment spans residues 1410–1464 (ITFQEQGDKVMSECSLEKNERACIDFAISAKPLTRYMPQNKQSFQYKTWTFVVSP). The stretch at 1449–1702 (NKQSFQYKTW…LFVAVIMDNF (254 aa)) is one IV repeat. The chain crosses the membrane as a helical span at residues 1465–1483 (PFEYFIMAMIALNTVVLMM). The Extracellular segment spans residues 1484–1491 (KFYDAPYE). The helical transmembrane segment at 1492–1516 (YELMLKCLNIVFTSMFSMECILKII) threads the bilayer. The Cytoplasmic portion of the chain corresponds to 1517 to 1526 (AFGVLNYFRD). The helical transmembrane segment at 1527-1548 (AWNVFDFVTVLGSITDILVTEI) threads the bilayer. Residues 1549–1554 (ANNFIN) are Extracellular-facing. Asn-1554 carries an N-linked (GlcNAc...) asparagine glycan. The chain crosses the membrane as a helical span at residues 1555 to 1573 (LSFLRLFRAARLIKLLRQG). The Cytoplasmic segment spans residues 1574 to 1592 (YTIRILLWTFVQSFKALPY). A helical membrane pass occupies residues 1593–1612 (VCLLIAMLFFIYAIIGMQVF). Over 1613 to 1674 (GNIALDDDTS…ANASECGSDF (62 aa)) the chain is Extracellular. N-linked (GlcNAc...) asparagine glycosylation is present at Asn-1666. A helical transmembrane segment spans residues 1675 to 1698 (AYFYFVSFIFLCSFLMLNLFVAVI). Topologically, residues 1699-2327 (MDNFEYLTRD…YHHPDQDHWC (629 aa)) are cytoplasmic. Residues 1715-1750 (HHLDEFIRVWAEYDPAACGRISYNDMFEMLKHMSPP) enclose the EF-hand domain. Ca(2+) contacts are provided by Asp-1728, Arg-1734, and Asp-1739. Residues 1972–2193 (TLRGPDGEPQ…TPRPSITYKT (222 aa)) form a disordered region. Residues 2039-2053 (SHHHHHRCHRRRDKK) show a composition bias toward basic residues. A Phosphoserine modification is found at Ser-2056. Positions 2088 to 2104 (CRRDRKQERGRSQERRQ) are enriched in basic and acidic residues. Composition is skewed to polar residues over residues 2131–2141 (PSLSSHPTSPT) and 2152–2168 (GSGS…SGAS). 3 positions are modified to phosphoserine: Ser-2212, Ser-2221, and Ser-2244. Disordered regions lie at residues 2230 to 2249 (EPLS…PYLG) and 2273 to 2292 (ATNS…TSQS). Residues 2276 to 2292 (SGRSSRTSYVSSLTSQS) are compositionally biased toward low complexity.

The protein belongs to the calcium channel alpha-1 subunit (TC 1.A.1.11) family. CACNA1B subfamily. Multisubunit complex consisting of alpha-1, alpha-2, beta and delta subunits in a 1:1:1:1 ratio. The channel activity is directed by the pore-forming and voltage-sensitive alpha-1 subunit. In many cases, this subunit is sufficient to generate voltage-sensitive calcium channel activity. The auxiliary subunits beta and alpha-2/delta linked by a disulfide bridge regulate the channel activity. Interacts with RIMS1. Interacts with FMR1 (via C-terminus); this interaction induces a decrease in the number of presynaptic functional CACNA1B channels at the cell surface. In terms of processing, phosphorylated in vitro by CaM-kinase II, PKA, PKC and CGPK. In terms of tissue distribution, widespread expression throughout the brain. Highest levels in pyramidal cell layers C1, C2 and C3 of the hippocampus, in the dentate gyrus, in the cortex layers 2 et 4, in the subiculum and the habenula.

The protein localises to the membrane. It catalyses the reaction Ca(2+)(in) = Ca(2+)(out). With respect to regulation, is specifically blocked by omega-conotoxin GVIA. Is specifically blocked by omega-conotoxin MVIIA (ziconotide). Is insensitive to dihydropyridines (DHP). Its function is as follows. Voltage-sensitive calcium channels (VSCC) mediate the entry of calcium ions into excitable cells and are also involved in a variety of calcium-dependent processes, including muscle contraction, hormone or neurotransmitter release, gene expression, cell motility, cell division and cell death. This alpha-1B subunit gives rise to N-type calcium currents. N-type calcium channels belong to the 'high-voltage activated' (HVA) group. They are involved in pain signaling. Calcium channels containing alpha-1B subunit may play a role in directed migration of immature neurons. Mediates Ca(2+) release probability at hippocampal neuronal soma and synaptic terminals. The polypeptide is Voltage-dependent N-type calcium channel subunit alpha-1B (Cacna1b) (Mus musculus (Mouse)).